Here is a 1188-residue protein sequence, read N- to C-terminus: Integrin alpha-11 (1188 aa).

The signal sequence occupies residues Met1–Thr22. Residues Phe23–Pro1141 lie on the Extracellular side of the membrane. FG-GAP repeat units follow at residues Asn24 to Lys85 and Val91 to Thr151. Cys76 and Cys83 are joined by a disulfide. 2 N-linked (GlcNAc...) asparagine glycosylation sites follow: Asn82 and Asn95. 2 disulfide bridges follow: Cys121–Cys139 and Cys129–Cys159. Positions Asp164 to Leu345 constitute a VWFA domain. 5 N-linked (GlcNAc...) asparagine glycosylation sites follow: Asn291, Asn331, Asn358, Asn449, and Asn462. FG-GAP repeat units follow at residues Thr355–Leu406, Leu411–Asn461, Asn462–Tyr527, Asn528–Lys586, and Gln590–Ser650. Ca(2+) is bound by residues Asp488, Asp490, Asp492, and Asp496. N-linked (GlcNAc...) asparagine glycosylation occurs at Asn528. Ca(2+)-binding residues include Asp551, Asn553, Asp555, Asp559, Asp613, Asn615, Asp617, and Asp621. The N-linked (GlcNAc...) asparagine glycan is linked to Asn642. Intrachain disulfides connect Cys659–Cys668, Cys674–Cys729, and Cys781–Cys787. N-linked (GlcNAc...) asparagine glycosylation is present at Asn694. Residue Asn857 is glycosylated (N-linked (GlcNAc...) asparagine). A disulfide bridge links Cys881 with Cys893. N-linked (GlcNAc...) asparagine glycosylation is found at Asn894, Asn973, Asn1031, Asn1039, and Asn1059. The helical transmembrane segment at Ile1142 to Trp1164 threads the bilayer. At Lys1165–Glu1188 the chain is on the cytoplasmic side.

It belongs to the integrin alpha chain family. As to quaternary structure, heterodimer of an alpha and a beta subunit. Alpha-11 associates with beta-1. Interacts with RAB21. According to PubMed:10464311, highest levels of expression in uterus and heart, intermediate levels in skeletal muscle and intermediate to low levels in pancreas, kidney and placenta. According to PubMed:10486209, also found in brain, colon, lung, small intestine, stomach, testis, salivary glands, thyroid glands and prostate. Very low levels in peripheral blood lymphocytes, fetal brain and fetal liver.

Its subcellular location is the membrane. Functionally, integrin alpha-11/beta-1 is a receptor for collagen. This chain is Integrin alpha-11 (ITGA11), found in Homo sapiens (Human).